Reading from the N-terminus, the 225-residue chain is Ribose-5-phosphate isomerase A (225 aa).

Substrate-binding positions include 26–29 (TGST), 82–85 (DGAD), and 95–98 (KGGG). E104 (proton acceptor) is an active-site residue. K122 lines the substrate pocket.

Belongs to the ribose 5-phosphate isomerase family. In terms of assembly, homodimer.

It catalyses the reaction aldehydo-D-ribose 5-phosphate = D-ribulose 5-phosphate. It participates in carbohydrate degradation; pentose phosphate pathway; D-ribose 5-phosphate from D-ribulose 5-phosphate (non-oxidative stage): step 1/1. Functionally, catalyzes the reversible conversion of ribose-5-phosphate to ribulose 5-phosphate. The sequence is that of Ribose-5-phosphate isomerase A from Streptococcus mutans serotype c (strain ATCC 700610 / UA159).